The chain runs to 434 residues: Adenylosuccinate synthetase (434 aa).

GTP is bound by residues Gly13 to Lys19 and Gly41 to Thr43. Residue Asp14 is the Proton acceptor of the active site. Residues Asp14 and Gly41 each coordinate Mg(2+). IMP-binding positions include Asp14–Lys17, Asn39–His42, Thr133, Arg147, Gln228, Thr243, and Arg307. The active-site Proton donor is His42. Ser303–Arg309 contacts substrate. GTP contacts are provided by residues Arg309, Lys335 to Asp337, and Ser417 to Gly419.

The protein belongs to the adenylosuccinate synthetase family. Homodimer. Mg(2+) is required as a cofactor.

The protein resides in the cytoplasm. The catalysed reaction is IMP + L-aspartate + GTP = N(6)-(1,2-dicarboxyethyl)-AMP + GDP + phosphate + 2 H(+). The protein operates within purine metabolism; AMP biosynthesis via de novo pathway; AMP from IMP: step 1/2. Its function is as follows. Plays an important role in the de novo pathway of purine nucleotide biosynthesis. Catalyzes the first committed step in the biosynthesis of AMP from IMP. This chain is Adenylosuccinate synthetase, found in Wigglesworthia glossinidia brevipalpis.